Here is a 329-residue protein sequence, read N- to C-terminus: Caveolae-associated protein 4a (329 aa).

2 disordered regions span residues 198–260 and 274–329; these read SKEN…NIAK and KERT…IHED. Residues 198-262 adopt a coiled-coil conformation; that stretch reads SKENMNKTRE…RLKENIAKKA (65 aa). Basic and acidic residues predominate over residues 201–220; the sequence is NMNKTREKTRENLSKTKESL. Residues 221-232 show a composition bias toward polar residues; that stretch reads SKTGQTLGTKFN. A compositionally biased stretch (basic and acidic residues) spans 242–260; sequence EQREKIKQSSERLKENIAK. The segment covering 279-290 has biased composition (low complexity); sequence AEGQEGAEAEPA. The residue at position 292 (T292) is a Phosphothreonine. A compositionally biased stretch (basic and acidic residues) spans 310-329; sequence TENKREGPVSEEGATRIHED.

The protein belongs to the CAVIN family.

It localises to the cytoplasm. The protein resides in the myofibril. It is found in the sarcomere. Its subcellular location is the membrane. The protein localises to the caveola. Functionally, induces rhoa activation and activates nppa transcription and myofibrillar organization through the rho/rock signaling pathway. This is Caveolae-associated protein 4a (cavin4a) from Danio rerio (Zebrafish).